A 64-amino-acid chain; its full sequence is Cytochrome c oxidase subunit 2 (64 aa).

Residues 1–14 (MAHPSQLGFQDAAS) are Mitochondrial intermembrane-facing. Residues 15–45 (PVMEELXHFHDHTLMIVFLISTLVXYIIVAM) form a helical membrane-spanning segment. The Mitochondrial matrix segment spans residues 46 to 64 (VSTKLTNKYVLDSQEIEIV).

It belongs to the cytochrome c oxidase subunit 2 family. As to quaternary structure, component of the cytochrome c oxidase (complex IV, CIV), a multisubunit enzyme composed of 14 subunits. The complex is composed of a catalytic core of 3 subunits MT-CO1, MT-CO2 and MT-CO3, encoded in the mitochondrial DNA, and 11 supernumerary subunits COX4I, COX5A, COX5B, COX6A, COX6B, COX6C, COX7A, COX7B, COX7C, COX8 and NDUFA4, which are encoded in the nuclear genome. The complex exists as a monomer or a dimer and forms supercomplexes (SCs) in the inner mitochondrial membrane with NADH-ubiquinone oxidoreductase (complex I, CI) and ubiquinol-cytochrome c oxidoreductase (cytochrome b-c1 complex, complex III, CIII), resulting in different assemblies (supercomplex SCI(1)III(2)IV(1) and megacomplex MCI(2)III(2)IV(2)). Found in a complex with TMEM177, COA6, COX18, COX20, SCO1 and SCO2. Interacts with TMEM177 in a COX20-dependent manner. Interacts with COX20. Interacts with COX16. Cu cation serves as cofactor.

It localises to the mitochondrion inner membrane. The enzyme catalyses 4 Fe(II)-[cytochrome c] + O2 + 8 H(+)(in) = 4 Fe(III)-[cytochrome c] + 2 H2O + 4 H(+)(out). Its function is as follows. Component of the cytochrome c oxidase, the last enzyme in the mitochondrial electron transport chain which drives oxidative phosphorylation. The respiratory chain contains 3 multisubunit complexes succinate dehydrogenase (complex II, CII), ubiquinol-cytochrome c oxidoreductase (cytochrome b-c1 complex, complex III, CIII) and cytochrome c oxidase (complex IV, CIV), that cooperate to transfer electrons derived from NADH and succinate to molecular oxygen, creating an electrochemical gradient over the inner membrane that drives transmembrane transport and the ATP synthase. Cytochrome c oxidase is the component of the respiratory chain that catalyzes the reduction of oxygen to water. Electrons originating from reduced cytochrome c in the intermembrane space (IMS) are transferred via the dinuclear copper A center (CU(A)) of subunit 2 and heme A of subunit 1 to the active site in subunit 1, a binuclear center (BNC) formed by heme A3 and copper B (CU(B)). The BNC reduces molecular oxygen to 2 water molecules using 4 electrons from cytochrome c in the IMS and 4 protons from the mitochondrial matrix. The chain is Cytochrome c oxidase subunit 2 (mt-co2) from Scaphirhynchus platorynchus (Shovelnose sturgeon).